A 156-amino-acid polypeptide reads, in one-letter code: SsrA-binding protein (156 aa).

This sequence belongs to the SmpB family.

The protein localises to the cytoplasm. Required for rescue of stalled ribosomes mediated by trans-translation. Binds to transfer-messenger RNA (tmRNA), required for stable association of tmRNA with ribosomes. tmRNA and SmpB together mimic tRNA shape, replacing the anticodon stem-loop with SmpB. tmRNA is encoded by the ssrA gene; the 2 termini fold to resemble tRNA(Ala) and it encodes a 'tag peptide', a short internal open reading frame. During trans-translation Ala-aminoacylated tmRNA acts like a tRNA, entering the A-site of stalled ribosomes, displacing the stalled mRNA. The ribosome then switches to translate the ORF on the tmRNA; the nascent peptide is terminated with the 'tag peptide' encoded by the tmRNA and targeted for degradation. The ribosome is freed to recommence translation, which seems to be the essential function of trans-translation. The protein is SsrA-binding protein of Staphylococcus haemolyticus (strain JCSC1435).